A 225-amino-acid polypeptide reads, in one-letter code: MEKLLWCLLIMISFSRTFGHEDMFKKAFVFPKESDTSYVSLEAESKKPLNTFTVCLHFYTALSTVRSFSVFSYATKKNSNDILIFWNKDKQYTFGVGGAEVRFMVSEIPEAPTHICASWESATGIVEFWIDGKPKVRKSLHKGYTVGPDASIILGQEQDSYGGDFDAKQSLVGDIGDVNMWDFVLSPEQISTVYVGGTLSPNVLNWRALNYKAQGDVFIKPQLWS.

The N-terminal stretch at 1-19 is a signal peptide; the sequence is MEKLLWCLLIMISFSRTFG. Positions 24-225 constitute a Pentraxin (PTX) domain; it reads FKKAFVFPKE…DVFIKPQLWS (202 aa). An intrachain disulfide couples cysteine 55 to cysteine 116. Positions 80, 157, 158, 159, and 169 each coordinate Ca(2+).

It belongs to the pentraxin family. As to quaternary structure, homopentamer. Pentraxin (or pentaxin) have a discoid arrangement of 5 non-covalently bound subunits. Interacts with FCN1; may regulate monocyte activation by FCN1. It depends on Ca(2+) as a cofactor. As to expression, found in plasma.

It is found in the secreted. In terms of biological role, displays several functions associated with host defense: it promotes agglutination, bacterial capsular swelling, phagocytosis and complement fixation through its calcium-dependent binding to phosphorylcholine. Can interact with DNA and histones and may scavenge nuclear material released from damaged circulating cells. This is C-reactive protein (Crp) from Mus musculus (Mouse).